The primary structure comprises 480 residues: MKEFWQTCVSRLEQELPPQQISAWIRPLVPLAYDEAQAVLRVAAPNRFKLDWVRKNFSHQIEALAAEWYQRPVQVTFELPGTSSAPRIPMAVPRPVAVSVPAVVAAVQQASEPAPPAPAPAPAAPAPAPASADAANIVYERSRLNTDLTFENFVTGKANQLARAAALQVAENPGTSYNPLFLYGGVGLGKTHLIHAIGNAMVAAGTGVRVRYVHADQYVSDVVKAYQRKAFDDFKRYYHSLDLLLIDDIQFFSGKNRTQEEFFYAFEAMVAQRKQIIITSDTYPKELSGIDSRLISRFDSGLTVAIEPPELEMRVAILLRKAESEGVPMPEEVAFFIAKHLRSNVRELEGALRKVLAYARFHGRDVLTVDVCKEALKDLLSVSNGQITVENIQKTVADFYKIKVADMYSKRRPANIALPRQVAMYLAKELTQKSLPEIGDLFGGRDHTTVLHAVRKISDARAKQAELNHTLHVLEQTLKG.

The tract at residues 1–71 (MKEFWQTCVS…EALAAEWYQR (71 aa)) is domain I, interacts with DnaA modulators. The interval 71–142 (RPVQVTFELP…DAANIVYERS (72 aa)) is domain II. Residues 143-359 (RLNTDLTFEN…GALRKVLAYA (217 aa)) form a domain III, AAA+ region region. ATP is bound by residues G187, G189, K190, and T191. A domain IV, binds dsDNA region spans residues 360-480 (RFHGRDVLTV…LHVLEQTLKG (121 aa)).

It belongs to the DnaA family. Oligomerizes as a right-handed, spiral filament on DNA at oriC.

The protein localises to the cytoplasm. Functionally, plays an essential role in the initiation and regulation of chromosomal replication. ATP-DnaA binds to the origin of replication (oriC) to initiate formation of the DNA replication initiation complex once per cell cycle. Binds the DnaA box (a 9 base pair repeat at the origin) and separates the double-stranded (ds)DNA. Forms a right-handed helical filament on oriC DNA; dsDNA binds to the exterior of the filament while single-stranded (ss)DNA is stabiized in the filament's interior. The ATP-DnaA-oriC complex binds and stabilizes one strand of the AT-rich DNA unwinding element (DUE), permitting loading of DNA polymerase. After initiation quickly degrades to an ADP-DnaA complex that is not apt for DNA replication. Binds acidic phospholipids. The sequence is that of Chromosomal replication initiator protein DnaA from Bordetella bronchiseptica (strain ATCC BAA-588 / NCTC 13252 / RB50) (Alcaligenes bronchisepticus).